Reading from the N-terminus, the 593-residue chain is SPI-1 type 3 secretion system translocon protein SctE (593 aa).

Coiled coils occupy residues aspartate 151–alanine 208 and glutamate 287–methionine 314. 2 helical membrane passes run valine 330–valine 350 and isoleucine 409–valine 429.

This sequence belongs to the SctE/SipB/YopB family. The core secretion machinery of the T3SS is composed of approximately 20 different proteins, including cytoplasmic components, a base, an export apparatus and a needle. This subunit is involved in the formation of a pore, called the translocon, in host membrane.

It localises to the secreted. Its subcellular location is the host membrane. It is found in the host cell. Functionally, component of the type III secretion system 1 (SPI-1 T3SS), also called injectisome, which is used to inject bacterial effector proteins into eukaryotic host cells. SipB/SctE1 and SipC/SctB are inserted into the host membrane where they form a pore and allow the translocation of effector proteins into the cytosol of target cells. Induces macrophage apoptosis either by binding and activating the proapoptotic enzyme caspase-1 (caspase-1 dependent), resulting in the release of interleukin-1 beta active form, or by disrupting mitochondria and inducing autophagy (caspase-1 independent). The former is dependent of its membrane-fusion activity. This chain is SPI-1 type 3 secretion system translocon protein SctE, found in Salmonella typhi.